A 138-amino-acid chain; its full sequence is Ribulose bisphosphate carboxylase small subunit (138 aa).

This sequence belongs to the RuBisCO small chain family. Heterohexadecamer of 8 large and 8 small subunits.

It is found in the plastid. It localises to the chloroplast. Its function is as follows. RuBisCO catalyzes two reactions: the carboxylation of D-ribulose 1,5-bisphosphate, the primary event in carbon dioxide fixation, as well as the oxidative fragmentation of the pentose substrate in the photorespiration process. Both reactions occur simultaneously and in competition at the same active site. Although the small subunit is not catalytic it is essential for maximal activity. This is Ribulose bisphosphate carboxylase small subunit from Pyropia haitanensis (Red seaweed).